Reading from the N-terminus, the 214-residue chain is Coiled-coil domain-containing protein 169 (214 aa).

Residues 56–138 (SEWKTRYETQ…YAFRLEQESK (83 aa)) adopt a coiled-coil conformation. Residues 154 to 214 (MTQVSGSNQV…RSNHLPKLNP (61 aa)) are disordered. 2 stretches are compositionally biased toward polar residues: residues 155 to 166 (TQVSGSNQVSKR) and 185 to 195 (HNSMNQKTTNA).

The protein belongs to the CCDC169 family.

In Mus musculus (Mouse), this protein is Coiled-coil domain-containing protein 169 (Ccdc169).